Here is a 576-residue protein sequence, read N- to C-terminus: Arginine--tRNA ligase (576 aa).

The 'HIGH' region signature appears at 122 to 132 (PNVAKEMHVGH).

The protein belongs to the class-I aminoacyl-tRNA synthetase family. Monomer.

The protein localises to the cytoplasm. It carries out the reaction tRNA(Arg) + L-arginine + ATP = L-arginyl-tRNA(Arg) + AMP + diphosphate. The sequence is that of Arginine--tRNA ligase from Pectobacterium carotovorum subsp. carotovorum (strain PC1).